We begin with the raw amino-acid sequence, 218 residues long: Adenylate kinase (218 aa).

10–15 (GAGKGT) contacts ATP. The segment at 30–59 (STGDMLRAAVKAGSPLGLKVKDIMTSGGLV) is NMP. AMP contacts are provided by residues T31, R36, 57–59 (GLV), 85–88 (GFPR), and Q92. Residues 122 to 159 (GRRVHEASGRVYHVKHNAPKTEGVDDETGEPLVQRDDD) are LID. Residues R123 and 132–133 (VY) each bind ATP. Residues R156 and R167 each coordinate AMP. An ATP-binding site is contributed by G203.

This sequence belongs to the adenylate kinase family. Monomer.

It is found in the cytoplasm. It carries out the reaction AMP + ATP = 2 ADP. Its pathway is purine metabolism; AMP biosynthesis via salvage pathway; AMP from ADP: step 1/1. Functionally, catalyzes the reversible transfer of the terminal phosphate group between ATP and AMP. Plays an important role in cellular energy homeostasis and in adenine nucleotide metabolism. This Saccharophagus degradans (strain 2-40 / ATCC 43961 / DSM 17024) protein is Adenylate kinase.